Reading from the N-terminus, the 428-residue chain is Lysophosphatidic acid phosphatase type 6 (428 aa).

The N-terminal 32 residues, Met1–Ala32, are a transit peptide targeting the mitochondrion. The segment at Arg58–Arg168 is substrate binding. His59 acts as the Nucleophile in catalysis. Residue Asp335 is the Proton donor of the active site.

The protein belongs to the histidine acid phosphatase family. In terms of assembly, monomer. Highly expressed in kidney, heart, small intestine, muscle, liver, prostate, testis, ovary and weakly expressed in thymus and colon.

It localises to the mitochondrion. It catalyses the reaction a phosphate monoester + H2O = an alcohol + phosphate. The enzyme catalyses 1-(9Z-octadecenoyl)-sn-glycero-3-phosphate + H2O = 1-(9Z-octadecenoyl)-sn-glycerol + phosphate. Its function is as follows. Hydrolyzes lysophosphatidic acid (LPA) containing a medium length fatty acid chain to the corresponding monoacylglycerol. Has highest activity with lysophosphatidic acid containing myristate (C14:0), monounsaturated oleate (C18:1) or palmitate (C16:0), and lower activity with C18:0 and C6:0 lysophosphatidic acid. The sequence is that of Lysophosphatidic acid phosphatase type 6 (ACP6) from Homo sapiens (Human).